We begin with the raw amino-acid sequence, 298 residues long: Acetyl-coenzyme A carboxylase carboxyl transferase subunit beta (298 aa).

One can recognise a CoA carboxyltransferase N-terminal domain in the interval 26–295 (LWIKCPETGE…DNANAVVPLA (270 aa)).

It belongs to the AccD/PCCB family. In terms of assembly, acetyl-CoA carboxylase is a heterohexamer composed of biotin carboxyl carrier protein (AccB), biotin carboxylase (AccC) and two subunits each of ACCase subunit alpha (AccA) and ACCase subunit beta (AccD).

It is found in the cytoplasm. It carries out the reaction N(6)-carboxybiotinyl-L-lysyl-[protein] + acetyl-CoA = N(6)-biotinyl-L-lysyl-[protein] + malonyl-CoA. It functions in the pathway lipid metabolism; malonyl-CoA biosynthesis; malonyl-CoA from acetyl-CoA: step 1/1. In terms of biological role, component of the acetyl coenzyme A carboxylase (ACC) complex. Biotin carboxylase (BC) catalyzes the carboxylation of biotin on its carrier protein (BCCP) and then the CO(2) group is transferred by the transcarboxylase to acetyl-CoA to form malonyl-CoA. The sequence is that of Acetyl-coenzyme A carboxylase carboxyl transferase subunit beta from Agrobacterium fabrum (strain C58 / ATCC 33970) (Agrobacterium tumefaciens (strain C58)).